A 554-amino-acid chain; its full sequence is Folate synthesis bifunctional protein, mitochondrial (554 aa).

The transit peptide at 1–42 directs the protein to the mitochondrion; sequence MAPLLSQTLIHTGRFLLRRFLEPPPAVISAVAASRVCFHRYY. Positions 90 to 215 are HPPK; the sequence is VIALGSNIGN…SFVLAPLVDL (126 aa). The Pterin-binding domain maps to 273–541; it reads THVMGILNLT…NVRHNADAAK (269 aa). The DHPS stretch occupies residues 275–554; it reads VMGILNLTPD…AMLRRRRSKG (280 aa). Asn280 contacts Mg(2+). Residues Thr320, Asp357, Asn376, Asp449, Lys494, and 529–531 each bind (7,8-dihydropterin-6-yl)methyl diphosphate; that span reads RVH.

This sequence in the N-terminal section; belongs to the HPPK family. The protein in the C-terminal section; belongs to the DHPS family. Mg(2+) is required as a cofactor. As to expression, ubiquitous.

It localises to the mitochondrion. It catalyses the reaction 6-hydroxymethyl-7,8-dihydropterin + ATP = (7,8-dihydropterin-6-yl)methyl diphosphate + AMP + H(+). The catalysed reaction is (7,8-dihydropterin-6-yl)methyl diphosphate + 4-aminobenzoate = 7,8-dihydropteroate + diphosphate. It participates in cofactor biosynthesis; tetrahydrofolate biosynthesis; 2-amino-4-hydroxy-6-hydroxymethyl-7,8-dihydropteridine diphosphate from 7,8-dihydroneopterin triphosphate: step 4/4. It functions in the pathway cofactor biosynthesis; tetrahydrofolate biosynthesis; 7,8-dihydrofolate from 2-amino-4-hydroxy-6-hydroxymethyl-7,8-dihydropteridine diphosphate and 4-aminobenzoate: step 1/2. In terms of biological role, catalyzes the first two consecutive steps of tetrahydrofolate biosynthesis. The sequence is that of Folate synthesis bifunctional protein, mitochondrial from Arabidopsis thaliana (Mouse-ear cress).